Consider the following 384-residue polypeptide: Formate dehydrogenase, chloroplastic/mitochondrial (384 aa).

A chloroplast and mitochondrion-targeting transit peptide spans 1-29 (MAMRQAAKATIRACSSSSSSGYFARRQFN). Substrate is bound by residues I128 and N152. NAD(+) is bound by residues 207-208 (RI), D227, 262-266 (PLTEK), N288, D314, and 338-341 (HTSG).

This sequence belongs to the D-isomer specific 2-hydroxyacid dehydrogenase family. FDH subfamily. As to quaternary structure, homodimer.

Its subcellular location is the mitochondrion. The protein resides in the plastid. It is found in the chloroplast. It catalyses the reaction formate + NAD(+) = CO2 + NADH. Catalyzes the NAD(+)-dependent oxidation of formate to carbon dioxide. Involved in the cell stress response. This chain is Formate dehydrogenase, chloroplastic/mitochondrial (FDH1), found in Arabidopsis thaliana (Mouse-ear cress).